The chain runs to 516 residues: MQRRDFLKYSVALGVASALPLWSRAVFAAERPTLPIPDLLTTDARNRIQLTIGAGQSTFGGKTATTWGYNGNLLGPAVKLQRGKAVTVDIYNQLTEETTLHWHGLEVPGEVDGGPQGIIPPGGKRSVTLNVDQPAATCWFHPHQHGKTGRQVAMGLAGLVVIEDDEILKLMLPKQWGIDDVPVIVQDKKFSADGQIDYQLDVMTAAVGWFGDTLLTNGAIYPQHAAPRGWLRLRLLNGCNARSLNFATSDNRPLYVIASDGGLLPEPVKVSELPVLMGERFEVLVEVNDNKPFDLVTLPVSQMGMAIAPFDKPHPVMRIQPIAISASGALPDTLSSLPALPSLEGLTVRKLQLSMDPMLDMMGMQMLMEKYGDQAMAGMDHSQMMGHMGHGNMNHMNHGGKFDFHHANKINGQAFDMNKPMFAAAKGQYERWVISGVGDMMLHPFHIHGTQFRILSENGKPPAAHRAGWKDTVKVEGNVSEVLVKFNHDAPKEHAYMAHCHLLEHEDTGMMLGFTV.

Positions 1 to 28 form a signal peptide, tat-type signal; that stretch reads MQRRDFLKYSVALGVASALPLWSRAVFA. Plastocyanin-like domains are found at residues 55 to 165 and 227 to 292; these read GQST…IEDD and PRGW…DNKP. Cu cation contacts are provided by His-101, His-103, His-141, and His-143. Positions 355–400 are methionine-rich region; sequence MDPMLDMMGMQMLMEKYGDQAMAGMDHSQMMGHMGHGNMNHMNHGG. Residues 402-516 form the Plastocyanin-like 3 domain; the sequence is FDFHHANKIN…DTGMMLGFTV (115 aa). The Cu cation site is built by His-443, His-446, His-448, His-499, Cys-500, His-501, and His-505.

This sequence belongs to the multicopper oxidase family. As to quaternary structure, monomer. Cu cation serves as cofactor. In terms of processing, exported by the Tat system. The position of the signal peptide cleavage has been experimentally proven.

It is found in the periplasm. It catalyses the reaction 4 Cu(+) + O2 + 4 H(+) = 4 Cu(2+) + 2 H2O. Its activity is regulated as follows. Ferroxidase and phenoloxidase activities are enhanced considerably in the presence of excess copper ions. A labile regulatory copper ion near the T1 copper site is important for the copper associated activation of enzyme activity. Ag(+) acts as a potent inhibitor of oxidase activity by binding at Cu(+) binding sites, blocking Cu(+) substrate binding and oxidation. pPD oxidase activity is strongly inhibited by sodium azide, an inhibitor of the electron transfer. Multicopper oxidase involved in copper homeostasis and copper tolerance under aerobic conditions. Is responsible for the oxidation of Cu(+) to the less harmful Cu(2+) in the periplasm, thereby preventing Cu(+) from entering the cytoplasm. Probably primarily functions as a cuprous oxidase in vivo. Functionally, in vitro, in the presence of excess copper ions, exhibits ferroxidase and phenoloxidase activities. Fe(2+) is an excellent substrate in the presence of excess Cu(2+), but is inactive in the absence of Cu(2+). Oxidizes the phenolate iron siderophores enterobactin, 2,3-dihydroxybenzoate (2,3-DHB) and 3-hydroxyanthranilate (3-HAA). Oxidation and thus inactivation of enterobactin could protect cells from the interaction of enterobactin with copper and play a central role as an interface between copper detoxification and iron homeostasis. Also oxidizes a variety of phenolic model substrates, including 2,2'-azinobis(3-ethylbenzthiazolinesulfonic acid) (ABTS), p-phenylenediamine (pPD), 2,6-dimethoxyphenol (2,6-DMP) and 3,4-dihydroxybenzoic acid (3,4-DHB). In Escherichia coli (strain K12), this protein is Multicopper oxidase CueO.